Reading from the N-terminus, the 1065-residue chain is Isoleucine--tRNA ligase (1065 aa).

Residues 49–59 (PYVSGAIHLGT) carry the 'HIGH' region motif. Positions 625 to 629 (KMSKS) match the 'KMSKS' region motif. Position 628 (Lys628) interacts with ATP.

This sequence belongs to the class-I aminoacyl-tRNA synthetase family. IleS type 2 subfamily. Monomer. It depends on Zn(2+) as a cofactor.

The protein resides in the cytoplasm. It catalyses the reaction tRNA(Ile) + L-isoleucine + ATP = L-isoleucyl-tRNA(Ile) + AMP + diphosphate. Catalyzes the attachment of isoleucine to tRNA(Ile). As IleRS can inadvertently accommodate and process structurally similar amino acids such as valine, to avoid such errors it has two additional distinct tRNA(Ile)-dependent editing activities. One activity is designated as 'pretransfer' editing and involves the hydrolysis of activated Val-AMP. The other activity is designated 'posttransfer' editing and involves deacylation of mischarged Val-tRNA(Ile). This is Isoleucine--tRNA ligase from Thermococcus kodakarensis (strain ATCC BAA-918 / JCM 12380 / KOD1) (Pyrococcus kodakaraensis (strain KOD1)).